A 172-amino-acid chain; its full sequence is uncharacterized protein (172 aa).

It belongs to the baculoviridae 19 kDa protein family.

This is an uncharacterized protein from Orgyia pseudotsugata multicapsid polyhedrosis virus (OpMNPV).